The sequence spans 212 residues: Ribonuclease HII (212 aa).

Residues 24–212 (QLVAGVDEVG…PVKKALGIEE (189 aa)) form the RNase H type-2 domain. Residues Asp-30, Glu-31, and Asp-122 each contribute to the a divalent metal cation site.

The protein belongs to the RNase HII family. Mn(2+) is required as a cofactor. It depends on Mg(2+) as a cofactor.

The protein resides in the cytoplasm. The catalysed reaction is Endonucleolytic cleavage to 5'-phosphomonoester.. In terms of biological role, endonuclease that specifically degrades the RNA of RNA-DNA hybrids. In Vibrio campbellii (strain ATCC BAA-1116), this protein is Ribonuclease HII.